Consider the following 86-residue polypeptide: Kappa-theraphotoxin-Cg1a 5 (86 aa).

A signal peptide spans 1–21; it reads MKVSVLITLAVLGVMFVWTSA. A propeptide spanning residues 22-50 is cleaved from the precursor; it reads AELEERGSDQRDSPAWLKSMERIFQSEER. Intrachain disulfides connect Cys52-Cys66, Cys59-Cys71, and Cys65-Cys78. Phe84 is modified (phenylalanine amide).

The protein belongs to the neurotoxin 10 (Hwtx-1) family. 28 (Jztx-11) subfamily. In terms of tissue distribution, expressed by the venom gland.

It localises to the secreted. Its function is as follows. This toxin acts as a voltage-dependent gating-modifier. It inhibits the sodium conductance (IC(50)=124 nM) and slows the fast inactivation (EC(50)=1180 nM) of Nav1.5/SCN5A. It significantly shifts the activation to more depolarized voltages and decreases the deactivation of Nav1.5 currents upon extreme depolarization, but only slightly affects voltage-dependence of steady-state inactivation. In addition, this toxin causes an approximately five-fold decrease in the rate of recovery from inactivation and an approximately 1.9-fold reduction in the closed-state inactivation rate. This toxin integrates the functions of site 3 toxins (alpha-scorpion toxins) with site 4 toxins (beta-scorpion and spider toxins) by targeting multiple sites on Nav1.5. Also shows inhibition of voltage-gated potassium channels (5 uM completely inhibits Kv2.1/KCNB1, whereas 5 uM moderately inhibits Kv4.2/KCND2 Kv4.1/KCND1 channels). In Chilobrachys guangxiensis (Chinese earth tiger tarantula), this protein is Kappa-theraphotoxin-Cg1a 5.